Reading from the N-terminus, the 430-residue chain is Putative aspergillopepsin A-like aspartic endopeptidase MCYG_07979 (430 aa).

An N-terminal signal peptide occupies residues 1 to 17; sequence MHLSSLLVAVLLPLALS. The propeptide at 18 to 87 is activation peptide; it reads KPTPRKKPGS…SKIAGGAPGA (70 aa). Residues 59-105 form a disordered region; that stretch reads STQGMDGYRPEPISRFQGNSKIAGGAPGAKDDGKDEKGEVENNPTSH. Basic and acidic residues predominate over residues 87 to 98; that stretch reads AKDDGKDEKGEV. In terms of domain architecture, Peptidase A1 spans 109 to 427; sequence FLSPVTIGGQ…DYRGPSVSLA (319 aa). Residue Asp-125 is part of the active site. An N-linked (GlcNAc...) asparagine glycan is attached at Asn-306. Residue Asp-314 is part of the active site. Asn-352 is a glycosylation site (N-linked (GlcNAc...) asparagine).

Belongs to the peptidase A1 family.

It is found in the secreted. The chain is Putative aspergillopepsin A-like aspartic endopeptidase MCYG_07979 from Arthroderma otae (strain ATCC MYA-4605 / CBS 113480) (Microsporum canis).